Reading from the N-terminus, the 988-residue chain is Voltage-gated delayed rectifier potassium channel KCNH5 (988 aa).

The Cytoplasmic portion of the chain corresponds to 1-217 (MPGGKRGLVA…LHYCAFKTTW (217 aa)). Positions 14–86 (TFLENIVRRS…TIEKVRQTFD (73 aa)) constitute a PAS domain. The region spanning 91–143 (NCFEVLLYKKNRTPVWFYMQIAPIRNEHEKVVLFLCTFKDITLFKQPIEDDST) is the PAC domain. Residues 218 to 238 (DWVILILTFYTAIMVPYNVSF) form a helical membrane-spanning segment. The Extracellular portion of the chain corresponds to 239–243 (KTKQN). Residues 244–264 (NIAWLVLDSVVDVIFLVDIVL) form a helical membrane-spanning segment. The Cytoplasmic portion of the chain corresponds to 265–291 (NFHTTFVGPGGEVISDPKLIRMNYLKT). Residues 292 to 312 (WFVIDLLSCLPYDIINAFENV) traverse the membrane as a helical segment. Residues 313–319 (DEGISSL) lie on the Extracellular side of the membrane. Residues 320–340 (FSSLKVVRLLRLGRVARKLDH) form a helical; Voltage-sensor membrane-spanning segment. Residues 341–346 (YLEYGA) lie on the Cytoplasmic side of the membrane. A helical transmembrane segment spans residues 347–367 (AVLVLLVCVFGLVAHWLACIW). Residues 368–419 (YSIGDYEVIDEVTNTIQIDSWLYQLALSIGTPYRYNTSAGIWEGGPSKDSLY) lie on the Extracellular side of the membrane. N403 is a glycosylation site (N-linked (GlcNAc...) asparagine). The segment at residues 420–440 (VSSLYFTMTSLTTIGFGNIAP) is an intramembrane region (pore-forming). The Selectivity filter motif lies at 432–437 (TIGFGN). Residues 441 to 446 (TTDVEK) are Extracellular-facing. Residues 447–467 (MFSVAMMMVGSLLYATIFGNV) traverse the membrane as a helical segment. At 468 to 988 (TTIFQQMYAN…PESDKDEINF (521 aa)) the chain is on the cytoplasmic side. Residue 550–668 (AFRLASDGCL…SFSRNLTLTC (119 aa)) participates in a nucleoside 3',5'-cyclic phosphate binding. Positions 704–715 (HPVRKLFQKFKQ) are calmodulin-binding. Positions 721 to 741 (IQGSAQSDPERSQLQVESRPL) are disordered. Residues 723-741 (GSAQSDPERSQLQVESRPL) show a composition bias toward polar residues. K785 is covalently cross-linked (Glycyl lysine isopeptide (Lys-Gly) (interchain with G-Cter in ubiquitin)). The tract at residues 838-893 (GLLSEDPKGSDSENSVTKNPLRKTDSCDSGITKSDLRLDKAGEARSPLEHSPSQAD) is disordered. A compositionally biased stretch (basic and acidic residues) spans 871 to 885 (SDLRLDKAGEARSPL). Position 883 is a phosphoserine (S883). The tract at residues 909-948 (TLQEVKHELKEDIQLLSCRMTALEKQVAEILKLLSEKSVP) is CAD (involved in subunit assembly).

The protein belongs to the potassium channel family. H (Eag) (TC 1.A.1.20) subfamily. Kv10.2/KCNH5 sub-subfamily. Homotetramer. The potassium channel is probably composed of a homo- or heterotetrameric complex of pore-forming alpha subunits that can associate with modulating beta subunits. Heteromultimer with KCNH1/EAG.

The protein resides in the membrane. The catalysed reaction is K(+)(in) = K(+)(out). Pore-forming (alpha) subunit of a voltage-gated delayed rectifier potassium channel that mediates outward-rectifying potassium currents which, on depolarization, reaches a steady-state level and do not inactivate. The kinetic is characterized by a slow activation time course and a small voltage dependence of the activation time constants, therefore, starts to open at more negative voltages. The activation kinetics depend on the prepulse potential and external divalent cation concentration. The time course of activation is biphasic with a fast and a slowly activating current component. With negative prepulses, the current activation is delayed and slowed down several fold, whereas more positive prepulses speed up activation, therefore the activation rate depends on holding potential. In Mus musculus (Mouse), this protein is Voltage-gated delayed rectifier potassium channel KCNH5.